A 125-amino-acid polypeptide reads, in one-letter code: Small ribosomal subunit protein uS12 (125 aa).

D89 carries the post-translational modification 3-methylthioaspartic acid. The segment at 104 to 125 (TAGVKDRSQSRSKYGAKASKQD) is disordered.

Belongs to the universal ribosomal protein uS12 family. In terms of assembly, part of the 30S ribosomal subunit. Contacts proteins S8 and S17. May interact with IF1 in the 30S initiation complex.

With S4 and S5 plays an important role in translational accuracy. In terms of biological role, interacts with and stabilizes bases of the 16S rRNA that are involved in tRNA selection in the A site and with the mRNA backbone. Located at the interface of the 30S and 50S subunits, it traverses the body of the 30S subunit contacting proteins on the other side and probably holding the rRNA structure together. The combined cluster of proteins S8, S12 and S17 appears to hold together the shoulder and platform of the 30S subunit. The chain is Small ribosomal subunit protein uS12 from Prochlorococcus marinus (strain MIT 9303).